Here is a 98-residue protein sequence, read N- to C-terminus: NADH-ubiquinone oxidoreductase chain 4L (98 aa).

3 consecutive transmembrane segments (helical) span residues 1-21 (MTAIYLNLTMAFSLALMGVLV), 29-49 (TLLCLEGMMLSLFILMTLLIT), and 59-79 (LPLTLLVFSACEAAIGLALLV).

It belongs to the complex I subunit 4L family. In terms of assembly, core subunit of respiratory chain NADH dehydrogenase (Complex I) which is composed of 45 different subunits.

The protein resides in the mitochondrion inner membrane. The catalysed reaction is a ubiquinone + NADH + 5 H(+)(in) = a ubiquinol + NAD(+) + 4 H(+)(out). Core subunit of the mitochondrial membrane respiratory chain NADH dehydrogenase (Complex I) which catalyzes electron transfer from NADH through the respiratory chain, using ubiquinone as an electron acceptor. Part of the enzyme membrane arm which is embedded in the lipid bilayer and involved in proton translocation. This chain is NADH-ubiquinone oxidoreductase chain 4L (MT-ND4L), found in Notoryctes typhlops (Southern marsupial mole).